The chain runs to 159 residues: Na(+)/H(+) antiporter subunit E1 (159 aa).

4 consecutive transmembrane segments (helical) span residues 1–21 (MAVQ…VTNS), 27–47 (FVLG…VLPG), 49–69 (FYVI…IELI), and 101–121 (WQIV…VLGV).

This sequence belongs to the CPA3 antiporters (TC 2.A.63) subunit E family. In terms of assembly, may form a heterooligomeric complex that consists of seven subunits: mnhA1, mnhB1, mnhC1, mnhD1, mnhE1, mnhF1 and mnhG1.

It localises to the cell membrane. Its function is as follows. Mnh complex is a Na(+)/H(+) antiporter involved in Na(+) excretion. In Staphylococcus aureus (strain Mu3 / ATCC 700698), this protein is Na(+)/H(+) antiporter subunit E1 (mnhE1).